Reading from the N-terminus, the 1794-residue chain is Protein TIC 214 (1794 aa).

A run of 6 helical transmembrane segments spans residues 23–43, 64–84, 87–107, 124–144, 172–192, and 218–238; these read VVVGLYYGFITTFSIGPSYLF, FIMGQFMMLISIYYTPLHLAL, PHTITVLVLPYLLFHFFWNNH, LSIQCVFLNNLIFQLFNHFIL, VGWLIGHILFMKWVGLVLFWI, and ILSILLFITCVYYLGRIPSPI. A disordered region spans residues 244 to 307; that stretch reads KETSETGETE…REGVNGKEKT (64 aa). The segment covering 248–258 has biased composition (acidic residues); sequence ETGETEEETDV. Composition is skewed to basic and acidic residues over residues 259-276 and 286-307; these read EIERTSETKGTEQEKEGS and SEEKGDPDKIDEREGVNGKEKT.

It belongs to the TIC214 family. As to quaternary structure, part of the Tic complex.

The protein localises to the plastid. It localises to the chloroplast inner membrane. Its function is as follows. Involved in protein precursor import into chloroplasts. May be part of an intermediate translocation complex acting as a protein-conducting channel at the inner envelope. This chain is Protein TIC 214, found in Amborella trichopoda.